Here is a 408-residue protein sequence, read N- to C-terminus: Branched-chain amino acid aminotransferase 2, chloroplastic (408 aa).

The N-terminal 58 residues, 1-58, are a transit peptide targeting the chloroplast; the sequence is MDCAAALLPGFHPNYLLCPSRHFSSLLPKTDLSSPLKFQLQNKQLSLASSHGFSPVIC. Residue Arg152 coordinates pyridoxal 5'-phosphate. The active-site Proton acceptor is the Lys254. Residue Lys254 is modified to N6-(pyridoxal phosphate)lysine. Glu290 contacts pyridoxal 5'-phosphate.

The protein belongs to the class-IV pyridoxal-phosphate-dependent aminotransferase family. It depends on pyridoxal 5'-phosphate as a cofactor. As to expression, expressed in lupulin glands and leaves.

It localises to the plastid. It is found in the chloroplast. It catalyses the reaction L-isoleucine + 2-oxoglutarate = (S)-3-methyl-2-oxopentanoate + L-glutamate. It carries out the reaction L-leucine + 2-oxoglutarate = 4-methyl-2-oxopentanoate + L-glutamate. The catalysed reaction is L-valine + 2-oxoglutarate = 3-methyl-2-oxobutanoate + L-glutamate. The protein operates within amino-acid biosynthesis; L-isoleucine biosynthesis; L-isoleucine from 2-oxobutanoate: step 4/4. Its pathway is amino-acid biosynthesis; L-leucine biosynthesis; L-leucine from 3-methyl-2-oxobutanoate: step 4/4. It functions in the pathway amino-acid biosynthesis; L-valine biosynthesis; L-valine from pyruvate: step 4/4. Functionally, converts 2-oxo acids to branched-chain amino acids. Shows no kinetic preferences corresponding to anabolic or catabolic functions, but likely involved in BCAA biosynthesis. In Humulus lupulus (European hop), this protein is Branched-chain amino acid aminotransferase 2, chloroplastic.